Here is a 317-residue protein sequence, read N- to C-terminus: Putative 12-oxophytodienoate reductase 10 (317 aa).

Residue 26–28 (PVG) participates in FMN binding. 117-120 (HGAN) serves as a coordination point for substrate. The active-site Proton donor is Tyr122. Arg169 contacts FMN. Arg209 is a substrate binding site. Residues Gly244 and 265 to 266 (GR) contribute to the FMN site.

This sequence belongs to the NADH:flavin oxidoreductase/NADH oxidase family. FMN serves as cofactor.

Functionally, putative oxophytodienoate reductase that may be involved in the biosynthesis or metabolism of oxylipin signaling molecules. This is Putative 12-oxophytodienoate reductase 10 (OPR10) from Oryza sativa subsp. japonica (Rice).